The following is a 391-amino-acid chain: Serpin-ZX (391 aa).

The interval 337 to 361 is RCL; that stretch reads GTEAAAASAGVIKLRGLLMEEDEID. The N-linked (GlcNAc...) asparagine glycan is linked to asparagine 375.

This sequence belongs to the serpin family. As to quaternary structure, interacts with RD21A. Expressed in root tips. Expressed in siliques (at protein level).

The protein localises to the secreted. Its subcellular location is the extracellular space. The protein resides in the apoplast. It is found in the cytoplasm. Inhibits metacaspase-9 (MC9) cysteine protease. Functions through cleavage of its reactive center loop and covalent binding to MC9. Involved in the control of elicitor-stimulated programmed cell death (PCD). During infection by the necrotrophic fungal pathogen Botrytis cinerea, functions to protect cells by limiting the PCD-promoting protease RD21A activity that is released from the ER body or vacuole to the cytoplasm. Involved in the control of water stress-induced cell death by limiting the pro-death protease RD21A activity that is released from the vacuole to the cytoplasm. The chain is Serpin-ZX from Arabidopsis thaliana (Mouse-ear cress).